We begin with the raw amino-acid sequence, 433 residues long: Deoxyguanosinetriphosphate triphosphohydrolase-like protein 2 (433 aa).

The region spanning 61-248 is the HD domain; that stretch reads RLTHSLEVAQ…METADDIAYT (188 aa).

It belongs to the dGTPase family. Type 2 subfamily.

This Deinococcus radiodurans (strain ATCC 13939 / DSM 20539 / JCM 16871 / CCUG 27074 / LMG 4051 / NBRC 15346 / NCIMB 9279 / VKM B-1422 / R1) protein is Deoxyguanosinetriphosphate triphosphohydrolase-like protein 2.